The sequence spans 234 residues: Protein CIST1 (234 aa).

The N-terminal stretch at 1–24 (MACPQLPPLLLLVLVVLLKAGVNY) is a signal peptide. The Extracellular portion of the chain corresponds to 25–180 (NTPFTDIVTS…GPRELHRNPS (156 aa)). Residues 41-121 (SPVSSLISSP…THPSSGSPSA (81 aa)) are compositionally biased toward polar residues. Residues 41 to 174 (SPVSSLISSP…PAPGDTGPRE (134 aa)) are disordered. The span at 122-140 (ELTPSSHSTLPSSESLTPH) shows a compositional bias: low complexity. Positions 141–159 (WSPTSHSPGTEPLTSTDQT) are enriched in polar residues. A helical transmembrane segment spans residues 181-201 (VVVVVCLLVSLLLIGSVVMAV). Residues 202 to 234 (RFCHRNESKFENLDEVSMGSVNDRLSFAHHLQE) are Cytoplasmic-facing.

It localises to the membrane. This is Protein CIST1 from Homo sapiens (Human).